Reading from the N-terminus, the 210-residue chain is High frequency lysogenization protein HflD homolog (210 aa).

A coiled-coil region spans residues 103–130; that stretch reads EAKAKLAERLQQIERQLPLYENDIMADQ.

This sequence belongs to the HflD family.

It localises to the cytoplasm. The protein localises to the cell inner membrane. This chain is High frequency lysogenization protein HflD homolog, found in Actinobacillus pleuropneumoniae serotype 5b (strain L20).